Reading from the N-terminus, the 487-residue chain is Betaine aldehyde dehydrogenase (487 aa).

K(+) contacts are provided by Ile-27 and Asp-93. 149–151 provides a ligand contact to NAD(+); that stretch reads GAW. Lys-161 serves as the catalytic Charge relay system. Residues 175–178 and 228–231 contribute to the NAD(+) site; these read KPSE and SVPT. Leu-243 contributes to the K(+) binding site. Residue Glu-249 is the Proton acceptor of the active site. Residues Gly-251, Cys-283, and Glu-384 each contribute to the NAD(+) site. The Nucleophile role is filled by Cys-283. The residue at position 283 (Cys-283) is a Cysteine sulfenic acid (-SOH). Residues Lys-454 and Gly-457 each contribute to the K(+) site. Glu-461 functions as the Charge relay system in the catalytic mechanism.

It belongs to the aldehyde dehydrogenase family. As to quaternary structure, dimer of dimers. K(+) serves as cofactor.

The catalysed reaction is betaine aldehyde + NAD(+) + H2O = glycine betaine + NADH + 2 H(+). The protein operates within amine and polyamine biosynthesis; betaine biosynthesis via choline pathway; betaine from betaine aldehyde: step 1/1. Functionally, involved in the biosynthesis of the osmoprotectant glycine betaine. Catalyzes the irreversible oxidation of betaine aldehyde to the corresponding acid. This Brucella suis (strain ATCC 23445 / NCTC 10510) protein is Betaine aldehyde dehydrogenase.